Here is a 119-residue protein sequence, read N- to C-terminus: Small ribosomal subunit protein uS13m (119 aa).

This sequence belongs to the universal ribosomal protein uS13 family. In terms of assembly, component of the mitochondrial small ribosomal subunit (mt-SSU). Mature N.crassa 74S mitochondrial ribosomes consist of a small (37S) and a large (54S) subunit. The 37S small subunit contains a 16S ribosomal RNA (16S mt-rRNA) and 32 different proteins. The 54S large subunit contains a 23S rRNA (23S mt-rRNA) and 42 different proteins.

Its subcellular location is the mitochondrion. Functionally, component of the mitochondrial ribosome (mitoribosome), a dedicated translation machinery responsible for the synthesis of mitochondrial genome-encoded proteins, including at least some of the essential transmembrane subunits of the mitochondrial respiratory chain. The mitoribosomes are attached to the mitochondrial inner membrane and translation products are cotranslationally integrated into the membrane. This chain is Small ribosomal subunit protein uS13m (sws2), found in Neurospora crassa (strain ATCC 24698 / 74-OR23-1A / CBS 708.71 / DSM 1257 / FGSC 987).